Here is a 746-residue protein sequence, read N- to C-terminus: Polyribonucleotide nucleotidyltransferase (746 aa).

Mg(2+) contacts are provided by Asp-515 and Asp-521. Residues Pro-581–Ile-640 enclose the KH domain. The 73-residue stretch at Gly-652–Val-724 folds into the S1 motif domain.

Belongs to the polyribonucleotide nucleotidyltransferase family. The cofactor is Mg(2+).

The protein localises to the cytoplasm. The catalysed reaction is RNA(n+1) + phosphate = RNA(n) + a ribonucleoside 5'-diphosphate. Involved in mRNA degradation. Catalyzes the phosphorolysis of single-stranded polyribonucleotides processively in the 3'- to 5'-direction. This chain is Polyribonucleotide nucleotidyltransferase, found in Renibacterium salmoninarum (strain ATCC 33209 / DSM 20767 / JCM 11484 / NBRC 15589 / NCIMB 2235).